The sequence spans 403 residues: Na(+)-translocating NADH-quinone reductase subunit B (403 aa).

Helical transmembrane passes span 56–76, 121–141, 163–183, 220–240, 265–285, 287–307, 312–332, 348–368, and 371–391; these read MMIT…WNTG, AYFL…EVLF, ILPP…GVVI, WTAV…SGGI, TSTL…IASW, IVSG…LIGS, MFAM…GMFF, WIFG…NPAF, and GMML…HFVV. Thr-230 carries the FMN phosphoryl threonine modification.

The protein belongs to the NqrB/RnfD family. As to quaternary structure, composed of six subunits; NqrA, NqrB, NqrC, NqrD, NqrE and NqrF. It depends on FMN as a cofactor.

Its subcellular location is the cell inner membrane. The catalysed reaction is a ubiquinone + n Na(+)(in) + NADH + H(+) = a ubiquinol + n Na(+)(out) + NAD(+). In terms of biological role, NQR complex catalyzes the reduction of ubiquinone-1 to ubiquinol by two successive reactions, coupled with the transport of Na(+) ions from the cytoplasm to the periplasm. NqrA to NqrE are probably involved in the second step, the conversion of ubisemiquinone to ubiquinol. In Ectopseudomonas mendocina (strain ymp) (Pseudomonas mendocina), this protein is Na(+)-translocating NADH-quinone reductase subunit B.